The chain runs to 125 residues: Cyclic diguanosine monophosphate-binding protein PA4608 (125 aa).

6–13 (DERRRFHR) serves as a coordination point for 3',3'-c-di-GMP. Residues 7 to 103 (ERRRFHRIAF…SISHLRRLVE (97 aa)) form the PilZ domain. An RXXXR motif; surrounds the surface of the c-di-GMP binding site motif is present at residues 9–13 (RRFHR). The short motif at 35 to 40 (DVSLHG) is the DXSXXG motif; surrounds the surface of the c-di-GMP binding site element. 3',3'-c-di-GMP is bound at residue Trp-77.

In terms of assembly, monomer in both c-di-GMP-bound and free forms.

In terms of biological role, binds the second messenger bis-(3'-5') cyclic dimeric guanosine monophosphate (c-di-GMP). Can bind two c-di-GMP molecules per monomer. May play a role in bacterial second-messenger regulated processes. Binding to c-di-GMP induces a conformational change of the C- and N-termini resulting in the exposure of a highly negative surface on one side of the protein to a possible effector protein. The protein is Cyclic diguanosine monophosphate-binding protein PA4608 of Pseudomonas aeruginosa (strain ATCC 15692 / DSM 22644 / CIP 104116 / JCM 14847 / LMG 12228 / 1C / PRS 101 / PAO1).